We begin with the raw amino-acid sequence, 237 residues long: DNA replication inhibitor toxin SocB (237 aa).

Interacts with cognate antitoxin SocA and with beta sliding clamp (dnaN). Post-translationally, degraded by ClpXP, recognition of SocB by ClpX requires SocA.

The protein localises to the cytoplasm. In terms of biological role, toxic component of an atypical type II toxin-antitoxin (TA) system. Upon overexpression in the absence of its cognate antitoxin SocA, leads to inhibition of colony formation, cellular filamentation, incomplete DNA replication and induction of the SOS response. Exercises toxicity by binding the beta sliding clamp (dnaN), blocking DNA replication and leading to premature replication fork collapse and incomplete cell division. Unlike most type II TA systems, the SocB toxin is unstable and targeted by its cognate antitoxin SocA for degradation by ClpXP. Not toxic upon expression in E.coli. In Caulobacter vibrioides (strain NA1000 / CB15N) (Caulobacter crescentus), this protein is DNA replication inhibitor toxin SocB.